The chain runs to 650 residues: DNA gyrase subunit B (650 aa).

The Toprim domain occupies 429-543 (NELFIVEGDS…AGYVYIAQPP (115 aa)). The Mg(2+) site is built by Glu435, Asp508, and Asp510.

The protein belongs to the type II topoisomerase GyrB family. Heterotetramer, composed of two GyrA and two GyrB chains. In the heterotetramer, GyrA contains the active site tyrosine that forms a transient covalent intermediate with DNA, while GyrB binds cofactors and catalyzes ATP hydrolysis. Requires Mg(2+) as cofactor. Mn(2+) is required as a cofactor. The cofactor is Ca(2+).

Its subcellular location is the cytoplasm. The enzyme catalyses ATP-dependent breakage, passage and rejoining of double-stranded DNA.. Functionally, a type II topoisomerase that negatively supercoils closed circular double-stranded (ds) DNA in an ATP-dependent manner to modulate DNA topology and maintain chromosomes in an underwound state. Negative supercoiling favors strand separation, and DNA replication, transcription, recombination and repair, all of which involve strand separation. Also able to catalyze the interconversion of other topological isomers of dsDNA rings, including catenanes and knotted rings. Type II topoisomerases break and join 2 DNA strands simultaneously in an ATP-dependent manner. The polypeptide is DNA gyrase subunit B (Streptococcus pyogenes serotype M18 (strain MGAS8232)).